A 108-amino-acid chain; its full sequence is Peptidyl-prolyl cis-trans isomerase FKBP1A (108 aa).

One can recognise a PPIase FKBP-type domain in the interval 20–108; the sequence is GQTCVVHYTG…VFDVELLKLE (89 aa). At Lys-53 the chain carries N6-acetyllysine; alternate. Lys-53 is modified (N6-succinyllysine; alternate).

It belongs to the FKBP-type PPIase family. FKBP1 subfamily. In terms of assembly, interacts with TGFBR1; prevents TGFBR1 phosphorylation by TGFBR2 and stabilizes it in the inactive conformation. Interacts with ACVR1B and SMAD7. Identified in a complex composed of RYR1, PDE4D, PKA, FKBP1A and protein phosphatase 1 (PP1). Interacts directly with RYR2 and RYR3. Interacts with GLMN; rapamycin and FK506 abolish the interaction with GLMN in a dose dependent manner. Interacts directly with RYR1.

The protein resides in the cytoplasm. Its subcellular location is the cytosol. It is found in the sarcoplasmic reticulum membrane. It catalyses the reaction [protein]-peptidylproline (omega=180) = [protein]-peptidylproline (omega=0). Its activity is regulated as follows. Inhibited by both FK506 and rapamycin. Keeps in an inactive conformation TGFBR1, the TGF-beta type I serine/threonine kinase receptor, preventing TGF-beta receptor activation in absence of ligand. Recruits SMAD7 to ACVR1B which prevents the association of SMAD2 and SMAD3 with the activin receptor complex, thereby blocking the activin signal. May modulate the RYR1 calcium channel activity. PPIases accelerate the folding of proteins. It catalyzes the cis-trans isomerization of proline imidic peptide bonds in oligopeptides. The sequence is that of Peptidyl-prolyl cis-trans isomerase FKBP1A (FKBP1A) from Homo sapiens (Human).